The sequence spans 195 residues: MDFQVVIFILCYFIGSIPFGFILSYVTGIGDIRKTGSGNIGATNVFRKNKKLALLTLLLDALKSFICVAIAQKYNIDNTILFLAALFAIIGHMFPVYLFFKGGKGVAPLLGSLIFIDYKVALCFLTFWIICFLLCKYASLSSIVSTLIALLFICTYYTIVQSVIFAITALLIITQHTDNIIRMLNKSENKINLKL.

5 helical membrane passes run 3 to 23, 52 to 72, 80 to 100, 113 to 133, and 147 to 167; these read FQVV…GFIL, LALL…AIAQ, ILFL…YLFF, LIFI…ICFL, and LIAL…IFAI.

Belongs to the PlsY family. Probably interacts with PlsX.

It localises to the cell inner membrane. It catalyses the reaction an acyl phosphate + sn-glycerol 3-phosphate = a 1-acyl-sn-glycero-3-phosphate + phosphate. It participates in lipid metabolism; phospholipid metabolism. Catalyzes the transfer of an acyl group from acyl-phosphate (acyl-PO(4)) to glycerol-3-phosphate (G3P) to form lysophosphatidic acid (LPA). This enzyme utilizes acyl-phosphate as fatty acyl donor, but not acyl-CoA or acyl-ACP. This chain is Glycerol-3-phosphate acyltransferase, found in Ehrlichia ruminantium (strain Gardel).